We begin with the raw amino-acid sequence, 108 residues long: UPF0060 membrane protein YnfA (108 aa).

The Periplasmic segment spans residues 1-5 (MIKTT). Residues 6–26 (LLFFATALCEIIGCFLPWLWL) traverse the membrane as a helical segment. Topologically, residues 27–30 (KRNA) are cytoplasmic. The helical transmembrane segment at 31 to 51 (SIWLLLPAGISLALFVWLLTL) threads the bilayer. Residues 52-60 (HPAASGRVY) lie on the Periplasmic side of the membrane. The helical transmembrane segment at 61–81 (AAYGGVYVCTALIWLRVVDGV) threads the bilayer. The Cytoplasmic portion of the chain corresponds to 82-84 (KLS). The chain crosses the membrane as a helical span at residues 85–105 (LYDWTGALIALCGMLIIVAGW). Over 106–108 (GRT) the chain is Periplasmic.

It belongs to the UPF0060 family.

The protein localises to the cell inner membrane. The protein is UPF0060 membrane protein YnfA of Escherichia coli (strain SMS-3-5 / SECEC).